Reading from the N-terminus, the 395-residue chain is Chorismate synthase (395 aa).

Arg-48 is a binding site for NADP(+). FMN is bound at residue Arg-125–Ser-127. Positions Arg-264–Asp-292 are disordered. Residues Gly-298, His-313 to Ser-317, and Arg-340 contribute to the FMN site. The segment at Pro-373–Asp-395 is disordered.

It belongs to the chorismate synthase family. It depends on FMNH2 as a cofactor.

The catalysed reaction is 5-O-(1-carboxyvinyl)-3-phosphoshikimate = chorismate + phosphate. It participates in metabolic intermediate biosynthesis; chorismate biosynthesis; chorismate from D-erythrose 4-phosphate and phosphoenolpyruvate: step 7/7. In terms of biological role, catalyzes the anti-1,4-elimination of the C-3 phosphate and the C-6 proR hydrogen from 5-enolpyruvylshikimate-3-phosphate (EPSP) to yield chorismate, which is the branch point compound that serves as the starting substrate for the three terminal pathways of aromatic amino acid biosynthesis. This reaction introduces a second double bond into the aromatic ring system. The protein is Chorismate synthase of Halorubrum lacusprofundi (strain ATCC 49239 / DSM 5036 / JCM 8891 / ACAM 34).